We begin with the raw amino-acid sequence, 1126 residues long: Carbamoyl phosphate synthase large chain (1126 aa).

The tract at residues 1-402 is carboxyphosphate synthetic domain; the sequence is MPKRTDIKSV…SLGKAMRSID (402 aa). Residues arginine 129, arginine 169, glycine 175, glycine 176, glutamate 208, isoleucine 210, glutamate 215, glycine 241, valine 242, histidine 243, glutamine 285, and glutamate 299 each coordinate ATP. One can recognise an ATP-grasp 1 domain in the interval 133–328; that stretch reads KKVVEEAGAE…IAKIATKLAL (196 aa). Mg(2+) is bound by residues glutamine 285, glutamate 299, and asparagine 301. Residues glutamine 285, glutamate 299, and asparagine 301 each coordinate Mn(2+). Residues 403–551 are oligomerization domain; it reads KRHMGFNWDG…YYYSCYADET (149 aa). The interval 552-962 is carbamoyl phosphate synthetic domain; that stretch reads ELRPRDREAV…AFAKSQLAAY (411 aa). The ATP-grasp 2 domain maps to 681 to 881; it reads GEVLKKADMN…LAKAAARIMV (201 aa). 10 residues coordinate ATP: arginine 717, lysine 765, leucine 767, glutamate 772, glycine 797, valine 798, histidine 799, serine 800, glutamine 840, and glutamate 852. 3 residues coordinate Mg(2+): glutamine 840, glutamate 852, and asparagine 854. Residues glutamine 840, glutamate 852, and asparagine 854 each contribute to the Mn(2+) site. Residues 963-1126 are allosteric domain; sequence EGGLPTSGNV…TQLFELESRD (164 aa). The MGS-like domain occupies 964–1126; that stretch reads GGLPTSGNVF…TQLFELESRD (163 aa).

Belongs to the CarB family. As to quaternary structure, composed of two chains; the small (or glutamine) chain promotes the hydrolysis of glutamine to ammonia, which is used by the large (or ammonia) chain to synthesize carbamoyl phosphate. Tetramer of heterodimers (alpha,beta)4. The cofactor is Mg(2+). Requires Mn(2+) as cofactor.

It carries out the reaction hydrogencarbonate + L-glutamine + 2 ATP + H2O = carbamoyl phosphate + L-glutamate + 2 ADP + phosphate + 2 H(+). The catalysed reaction is hydrogencarbonate + NH4(+) + 2 ATP = carbamoyl phosphate + 2 ADP + phosphate + 2 H(+). The protein operates within amino-acid biosynthesis; L-arginine biosynthesis; carbamoyl phosphate from bicarbonate: step 1/1. Its pathway is pyrimidine metabolism; UMP biosynthesis via de novo pathway; (S)-dihydroorotate from bicarbonate: step 1/3. Functionally, large subunit of the glutamine-dependent carbamoyl phosphate synthetase (CPSase). CPSase catalyzes the formation of carbamoyl phosphate from the ammonia moiety of glutamine, carbonate, and phosphate donated by ATP, constituting the first step of 2 biosynthetic pathways, one leading to arginine and/or urea and the other to pyrimidine nucleotides. The large subunit (synthetase) binds the substrates ammonia (free or transferred from glutamine from the small subunit), hydrogencarbonate and ATP and carries out an ATP-coupled ligase reaction, activating hydrogencarbonate by forming carboxy phosphate which reacts with ammonia to form carbamoyl phosphate. The sequence is that of Carbamoyl phosphate synthase large chain from Bifidobacterium adolescentis (strain ATCC 15703 / DSM 20083 / NCTC 11814 / E194a).